The following is a 93-amino-acid chain: MTKSELIANLVAQYPSLSVKSVDESVKEILEQIMGSLEQGERIEVRGFGSFSLHYRQPRVGRNPKTGESVKLDAKYVPHFKAGKELKERVDLA.

Belongs to the bacterial histone-like protein family. Heterodimer of an alpha and a beta chain.

In terms of biological role, this protein is one of the two subunits of integration host factor, a specific DNA-binding protein that functions in genetic recombination as well as in transcriptional and translational control. This is Integration host factor subunit beta from Glaesserella parasuis serovar 5 (strain SH0165) (Haemophilus parasuis).